The primary structure comprises 276 residues: Bifunctional protein FolD (276 aa).

NADP(+)-binding positions include 158-160 (NRS), Ser183, and Ile224.

The protein belongs to the tetrahydrofolate dehydrogenase/cyclohydrolase family. In terms of assembly, homodimer.

It catalyses the reaction (6R)-5,10-methylene-5,6,7,8-tetrahydrofolate + NADP(+) = (6R)-5,10-methenyltetrahydrofolate + NADPH. The enzyme catalyses (6R)-5,10-methenyltetrahydrofolate + H2O = (6R)-10-formyltetrahydrofolate + H(+). The protein operates within one-carbon metabolism; tetrahydrofolate interconversion. Catalyzes the oxidation of 5,10-methylenetetrahydrofolate to 5,10-methenyltetrahydrofolate and then the hydrolysis of 5,10-methenyltetrahydrofolate to 10-formyltetrahydrofolate. This is Bifunctional protein FolD from Picrophilus torridus (strain ATCC 700027 / DSM 9790 / JCM 10055 / NBRC 100828 / KAW 2/3).